We begin with the raw amino-acid sequence, 484 residues long: Putative cysteine ligase BshC (484 aa).

Residues 372–435 (RAFRDRVEGL…AARDEVLARH (64 aa)) adopt a coiled-coil conformation.

The protein belongs to the BshC family.

The polypeptide is Putative cysteine ligase BshC (Thermus thermophilus (strain ATCC BAA-163 / DSM 7039 / HB27)).